Reading from the N-terminus, the 261-residue chain is 5'-nucleotidase SurE (261 aa).

The a divalent metal cation site is built by Asp-8, Asp-9, Ser-43, and Asn-96.

This sequence belongs to the SurE nucleotidase family. The cofactor is a divalent metal cation.

The protein resides in the cytoplasm. It catalyses the reaction a ribonucleoside 5'-phosphate + H2O = a ribonucleoside + phosphate. Nucleotidase that shows phosphatase activity on nucleoside 5'-monophosphates. The polypeptide is 5'-nucleotidase SurE (Cereibacter sphaeroides (strain ATCC 17023 / DSM 158 / JCM 6121 / CCUG 31486 / LMG 2827 / NBRC 12203 / NCIMB 8253 / ATH 2.4.1.) (Rhodobacter sphaeroides)).